Consider the following 108-residue polypeptide: Synaptic plasticity regulator PANTS (108 aa).

Residues 58 to 108 (KNHSTQAKDSLQESERKRLADQRKFTPVWELRQKPPSDWHLPLNQGEPQDP) form a disordered region. Residues 67 to 81 (SLQESERKRLADQRK) show a composition bias toward basic and acidic residues.

Belongs to the UPF0545 family. Post-translationally, rapidly degraded by proteolysis following neuronal stimulation, resulting in increased AMPA receptor clustering.

The protein localises to the synapse. It localises to the synaptic cleft. Its function is as follows. Negatively regulates long-term potentiation and modulates adult synaptic plasticity. The polypeptide is Synaptic plasticity regulator PANTS (Danio rerio (Zebrafish)).